We begin with the raw amino-acid sequence, 191 residues long: Glutathione-dependent formaldehyde-activating enzyme (191 aa).

One can recognise a CENP-V/GFA domain in the interval 22 to 169 (FAGGTLQCLC…LTELGLTPYD (148 aa)). Residues Cys-29, Cys-31, Cys-50, Cys-52, Cys-55, Cys-97, and Cys-100 each contribute to the Zn(2+) site.

Belongs to the Gfa family. Requires Zn(2+) as cofactor.

It catalyses the reaction S-(hydroxymethyl)glutathione = glutathione + formaldehyde. The protein operates within one-carbon metabolism; formaldehyde degradation; formate from formaldehyde (glutathione route): step 1/3. In terms of biological role, catalyzes the condensation of formaldehyde and glutathione to S-hydroxymethylglutathione. The polypeptide is Glutathione-dependent formaldehyde-activating enzyme (Xanthomonas campestris pv. campestris (strain 8004)).